Consider the following 79-residue polypeptide: Small polypeptide DEVIL 8 (79 aa).

Residues 1–12 (MSRLRNSAQLQL) show a composition bias toward polar residues. Positions 1 to 37 (MSRLRNSAQLQLSKKESLGDNGGALNTTRSSRQKQGK) are disordered. The N-linked (GlcNAc...) asparagine glycan is linked to N26. The interval 39 to 70 (GFTRKCGRLVKEQRARFYIMRRCVVMLICWTD) is required for DVL/RTFL small polypeptide activity. A helical membrane pass occupies residues 55–71 (FYIMRRCVVMLICWTDH). N-linked (GlcNAc...) asparagine glycosylation is present at N74.

Belongs to the DVL/RTFL small polypeptides family.

The protein resides in the cell membrane. Small polypeptide acting as a regulatory molecule which coordinates cellular responses required for differentiation, growth and development, probably by restricting polar cell proliferation in lateral organs and coordinating socket cell recruitment and differentiation at trichome sites. The protein is Small polypeptide DEVIL 8 of Arabidopsis thaliana (Mouse-ear cress).